Here is a 170-residue protein sequence, read N- to C-terminus: NADH-quinone oxidoreductase subunit B (170 aa).

[4Fe-4S] cluster-binding residues include cysteine 37, cysteine 38, cysteine 102, and cysteine 131.

It belongs to the complex I 20 kDa subunit family. NDH-1 is composed of 14 different subunits. Subunits NuoB, C, D, E, F, and G constitute the peripheral sector of the complex. It depends on [4Fe-4S] cluster as a cofactor.

The protein localises to the cell inner membrane. It carries out the reaction a quinone + NADH + 5 H(+)(in) = a quinol + NAD(+) + 4 H(+)(out). NDH-1 shuttles electrons from NADH, via FMN and iron-sulfur (Fe-S) centers, to quinones in the respiratory chain. The immediate electron acceptor for the enzyme in this species is believed to be ubiquinone. Couples the redox reaction to proton translocation (for every two electrons transferred, four hydrogen ions are translocated across the cytoplasmic membrane), and thus conserves the redox energy in a proton gradient. The protein is NADH-quinone oxidoreductase subunit B of Geobacter sp. (strain M21).